Here is a 184-residue protein sequence, read N- to C-terminus: Large ribosomal subunit protein bL9 (184 aa).

Positions Leu-160–Ser-184 are disordered. Positions Asp-173–Ser-184 are enriched in basic and acidic residues.

Belongs to the bacterial ribosomal protein bL9 family.

In terms of biological role, binds to the 23S rRNA. This is Large ribosomal subunit protein bL9 from Wolbachia pipientis wMel.